We begin with the raw amino-acid sequence, 151 residues long: Flagellar assembly factor FliW 2 (151 aa).

This sequence belongs to the FliW family. As to quaternary structure, interacts with translational regulator CsrA and flagellin(s).

Its subcellular location is the cytoplasm. Its function is as follows. Acts as an anti-CsrA protein, binds CsrA and prevents it from repressing translation of its target genes, one of which is flagellin. Binds to flagellin and participates in the assembly of the flagellum. This is Flagellar assembly factor FliW 2 from Desulfotalea psychrophila (strain LSv54 / DSM 12343).